A 604-amino-acid polypeptide reads, in one-letter code: Phosphomethylpyrimidine synthase (604 aa).

Substrate-binding positions include Asn218, Met247, Tyr276, His312, 332–334 (SRG), 373–376 (DGLR), and Glu412. His416 is a binding site for Zn(2+). Tyr439 contributes to the substrate binding site. Zn(2+) is bound at residue His480. 3 residues coordinate [4Fe-4S] cluster: Cys560, Cys563, and Cys568.

This sequence belongs to the ThiC family. Homodimer. The cofactor is [4Fe-4S] cluster.

It carries out the reaction 5-amino-1-(5-phospho-beta-D-ribosyl)imidazole + S-adenosyl-L-methionine = 4-amino-2-methyl-5-(phosphooxymethyl)pyrimidine + CO + 5'-deoxyadenosine + formate + L-methionine + 3 H(+). Its pathway is cofactor biosynthesis; thiamine diphosphate biosynthesis. Functionally, catalyzes the synthesis of the hydroxymethylpyrimidine phosphate (HMP-P) moiety of thiamine from aminoimidazole ribotide (AIR) in a radical S-adenosyl-L-methionine (SAM)-dependent reaction. The chain is Phosphomethylpyrimidine synthase from Zymomonas mobilis subsp. mobilis (strain ATCC 31821 / ZM4 / CP4).